Consider the following 290-residue polypeptide: Nucleotide-binding protein Clos_0574 (290 aa).

Residue 8 to 15 (GLSGAGKS) coordinates ATP. 59–62 (DIRG) contributes to the GTP binding site.

The protein belongs to the RapZ-like family.

In terms of biological role, displays ATPase and GTPase activities. This chain is Nucleotide-binding protein Clos_0574, found in Alkaliphilus oremlandii (strain OhILAs) (Clostridium oremlandii (strain OhILAs)).